A 202-amino-acid polypeptide reads, in one-letter code: MTRPLVGVLALQGDVREHLAALNDSGADAVGIRRPEELEKIDGLVIPGGESTTMSKLLQIFELLEPLKARLRDGLPAYGSCAGMILLASEILDTRPDAQHLGAIDMTVRRNAFGRQVDSFESDLEFEGIVGDPMRAVFIRAPWVERVGDDVQVLARVPESGGAAAGRIVAVRQGAVVATSFHPEVTGDRRVHELFVDIVRGV.

An L-glutamine-binding site is contributed by 49–51 (GES). The active-site Nucleophile is Cys-81. Residues Arg-110 and 139–140 (IR) contribute to the L-glutamine site. Active-site charge relay system residues include His-182 and Glu-184.

The protein belongs to the glutaminase PdxT/SNO family. As to quaternary structure, in the presence of PdxS, forms a dodecamer of heterodimers. Only shows activity in the heterodimer.

It catalyses the reaction aldehydo-D-ribose 5-phosphate + D-glyceraldehyde 3-phosphate + L-glutamine = pyridoxal 5'-phosphate + L-glutamate + phosphate + 3 H2O + H(+). The catalysed reaction is L-glutamine + H2O = L-glutamate + NH4(+). It participates in cofactor biosynthesis; pyridoxal 5'-phosphate biosynthesis. Its function is as follows. Catalyzes the hydrolysis of glutamine to glutamate and ammonia as part of the biosynthesis of pyridoxal 5'-phosphate. The resulting ammonia molecule is channeled to the active site of PdxS. This Rhodococcus jostii (strain RHA1) protein is Pyridoxal 5'-phosphate synthase subunit PdxT.